The following is a 123-amino-acid chain: Large ribosomal subunit protein uL24 (123 aa).

The protein belongs to the universal ribosomal protein uL24 family. Part of the 50S ribosomal subunit.

Functionally, one of two assembly initiator proteins, it binds directly to the 5'-end of the 23S rRNA, where it nucleates assembly of the 50S subunit. Located at the polypeptide exit tunnel on the outside of the subunit. This Methanocella arvoryzae (strain DSM 22066 / NBRC 105507 / MRE50) protein is Large ribosomal subunit protein uL24.